The chain runs to 346 residues: tRNA N6-adenosine threonylcarbamoyltransferase (346 aa).

Fe cation-binding residues include His-111 and His-115. Substrate contacts are provided by residues 134-138 (LVSGG), Asp-167, Gly-180, and Asn-279. Asp-307 contacts Fe cation.

The protein belongs to the KAE1 / TsaD family. Requires Fe(2+) as cofactor.

It is found in the cytoplasm. It catalyses the reaction L-threonylcarbamoyladenylate + adenosine(37) in tRNA = N(6)-L-threonylcarbamoyladenosine(37) in tRNA + AMP + H(+). In terms of biological role, required for the formation of a threonylcarbamoyl group on adenosine at position 37 (t(6)A37) in tRNAs that read codons beginning with adenine. Is involved in the transfer of the threonylcarbamoyl moiety of threonylcarbamoyl-AMP (TC-AMP) to the N6 group of A37, together with TsaE and TsaB. TsaD likely plays a direct catalytic role in this reaction. In Burkholderia pseudomallei (strain 1106a), this protein is tRNA N6-adenosine threonylcarbamoyltransferase.